A 150-amino-acid polypeptide reads, in one-letter code: N-alpha-acetyltransferase 30 (150 aa).

Residues 2–150 (VTIVPYSHQY…DAFRYILYPN (149 aa)) form the N-acetyltransferase domain.

Belongs to the acetyltransferase family. MAK3 subfamily.

Its subcellular location is the cytoplasm. It localises to the nucleus. The enzyme catalyses N-terminal L-methionyl-L-leucyl-[protein] + acetyl-CoA = N-terminal N(alpha)-acetyl-L-methionyl-L-leucyl-[protein] + CoA + H(+). It carries out the reaction N-terminal L-methionyl-L-isoleucyl-[protein] + acetyl-CoA = N-terminal N(alpha)-acetyl-L-methionyl-L-isoleucyl-[protein] + CoA + H(+). The catalysed reaction is N-terminal L-methionyl-L-phenylalanyl-[protein] + acetyl-CoA = N-terminal N(alpha)-acetyl-L-methionyl-L-phenylalanyl-[protein] + CoA + H(+). It catalyses the reaction N-terminal L-methionyl-L-tryptophyl-[protein] + acetyl-CoA = N-terminal N(alpha)-acetyl-L-methionyl-L-tryptophyl-[protein] + CoA + H(+). The enzyme catalyses N-terminal L-methionyl-L-tyrosyl-[protein] + acetyl-CoA = N-terminal N(alpha)-acetyl-L-methionyl-L-tyrosyl-[protein] + CoA + H(+). Catalytic component of the NatC N-terminal acetyltransferase. This Schizosaccharomyces pombe (strain 972 / ATCC 24843) (Fission yeast) protein is N-alpha-acetyltransferase 30 (naa30).